Here is a 792-residue protein sequence, read N- to C-terminus: Phenylalanine--tRNA ligase beta subunit (792 aa).

One can recognise a tRNA-binding domain in the interval 39-147 (GESLGQVVVA…DDAPVGQALA (109 aa)). The 76-residue stretch at 400–475 (PQPARIRLRR…RIHGYDRVPT (76 aa)) folds into the B5 domain. Residues Asp-453, Asp-459, Glu-462, and Glu-463 each contribute to the Mg(2+) site. The FDX-ACB domain maps to 698–791 (SRFPSVRRDL…IEREHRARIR (94 aa)).

Belongs to the phenylalanyl-tRNA synthetase beta subunit family. Type 1 subfamily. In terms of assembly, tetramer of two alpha and two beta subunits. Mg(2+) is required as a cofactor.

The protein localises to the cytoplasm. The catalysed reaction is tRNA(Phe) + L-phenylalanine + ATP = L-phenylalanyl-tRNA(Phe) + AMP + diphosphate + H(+). This chain is Phenylalanine--tRNA ligase beta subunit, found in Xanthomonas euvesicatoria pv. vesicatoria (strain 85-10) (Xanthomonas campestris pv. vesicatoria).